We begin with the raw amino-acid sequence, 545 residues long: Phospholipase B-like 1 (545 aa).

A signal peptide spans 1–35 (MSRHSQDERLGLPQPPALLPLLLLLLAVAVPLSQA). Asn-68 is a glycosylation site (N-linked (GlcNAc...) (high mannose) asparagine; alternate). Residue Asn-68 is glycosylated (N-linked (GlcNAc...) (hybrid) asparagine; alternate). The propeptide at 206–224 (LSPTKNSSLKFFKRWDMGH) is removed in mature form. Residues Asn-305, Asn-363, and Asn-408 are each glycosylated (N-linked (GlcNAc...) (high mannose) asparagine; alternate). N-linked (GlcNAc...) (hybrid) asparagine; alternate glycans are attached at residues Asn-305, Asn-363, and Asn-408. Cystine bridges form between Cys-467/Cys-472 and Cys-471/Cys-486. N-linked (GlcNAc...) (high mannose) asparagine; alternate glycosylation is present at Asn-523. Asn-523 is a glycosylation site (N-linked (GlcNAc...) (hybrid) asparagine; alternate).

Belongs to the phospholipase B-like family. May form a homodimer, each monomer is composed of a chain A and a chain B. In terms of processing, the maturation cleavages that produces chains A and B are required to open the putative substrate binding pocket. Both chains A and B remain associated in the mature protein.

It localises to the lysosome. In terms of biological role, exhibits a weak phospholipase activity, acting on various phospholipids, including phosphatidylcholine, phosphatidylinositol, phosphatidylethanolamine and lysophospholipids. However, in view of the small size of the putative binding pocket, it has been proposed that it may act rather as an amidase or a peptidase. The protein is Phospholipase B-like 1 (PLBD1) of Bos taurus (Bovine).